Here is a 171-residue protein sequence, read N- to C-terminus: Glycine cleavage system H protein 4 (171 aa).

Positions 30 to 112 (FAEVGITDYA…YEAGWIAVIE (83 aa)) constitute a Lipoyl-binding domain. N6-lipoyllysine is present on K71. The disordered stretch occupies residues 139–171 (EKEEEVEVKEEELIETESIEELSEEELGYEENK).

It belongs to the GcvH family. In terms of assembly, the glycine cleavage system is composed of four proteins: P, T, L and H. (R)-lipoate is required as a cofactor.

The glycine cleavage system catalyzes the degradation of glycine. The H protein shuttles the methylamine group of glycine from the P protein to the T protein. The polypeptide is Glycine cleavage system H protein 4 (Aquifex aeolicus (strain VF5)).